A 271-amino-acid polypeptide reads, in one-letter code: Glutamate racemase (271 aa).

Residues 10 to 11 and 42 to 43 each bind substrate; these read DS and YG. C73 serves as the catalytic Proton donor/acceptor. Residue 74–75 participates in substrate binding; it reads NT. C183 functions as the Proton donor/acceptor in the catalytic mechanism. Residue 184–185 coordinates substrate; that stretch reads TH.

Belongs to the aspartate/glutamate racemases family.

It carries out the reaction L-glutamate = D-glutamate. Its pathway is cell wall biogenesis; peptidoglycan biosynthesis. Functionally, provides the (R)-glutamate required for cell wall biosynthesis. This is Glutamate racemase from Lactococcus lactis subsp. lactis (strain IL1403) (Streptococcus lactis).